The following is a 578-amino-acid chain: Telomere repeat-binding protein 1 (578 aa).

Positions 293–372 constitute a Ubiquitin-like domain; the sequence is VKLRIKSFRV…HLDSLDFSLE (80 aa). The disordered stretch occupies residues 440–467; it reads ELSSQSQPPSRKSRRSEQQQQQAAQRRI. Residues 463 to 522 form the HTH myb-type domain; that stretch reads AQRRIRRPFSVAEVEALVQAVEKLGTGRWRDVKLCAFEDADHRTYVDLKDKWKTLVHTAK. Interaction with DNA stretches follow at residues 465–469, 511–515, and 522–529; these read RRIRR, KDKWK, and KISPQQRR. The H-T-H motif DNA-binding region spans 491-518; that stretch reads WRDVKLCAFEDADHRTYVDLKDKWKTLV.

As to quaternary structure, homodimer and heterodimer with TRP2 and TRP3. Interacts with KU70. In terms of tissue distribution, expressed ubiquitously. Highest expression in flowers and leaves.

The protein localises to the nucleus. Its function is as follows. Binds specifically to the plant telomeric double-stranded DNA sequences 5'-GGTTTAG-3'. At least 4 repeats of telomeric sequences are required for binding. Induces DNA bending. This is Telomere repeat-binding protein 1 (TRP1) from Arabidopsis thaliana (Mouse-ear cress).